A 194-amino-acid polypeptide reads, in one-letter code: Peptidyl-tRNA hydrolase (194 aa).

TRNA is bound at residue Y17. H22 serves as the catalytic Proton acceptor. Positions 68, 70, and 116 each coordinate tRNA.

The protein belongs to the PTH family. As to quaternary structure, monomer.

Its subcellular location is the cytoplasm. It carries out the reaction an N-acyl-L-alpha-aminoacyl-tRNA + H2O = an N-acyl-L-amino acid + a tRNA + H(+). In terms of biological role, hydrolyzes ribosome-free peptidyl-tRNAs (with 1 or more amino acids incorporated), which drop off the ribosome during protein synthesis, or as a result of ribosome stalling. Its function is as follows. Catalyzes the release of premature peptidyl moieties from peptidyl-tRNA molecules trapped in stalled 50S ribosomal subunits, and thus maintains levels of free tRNAs and 50S ribosomes. The polypeptide is Peptidyl-tRNA hydrolase (Mannheimia succiniciproducens (strain KCTC 0769BP / MBEL55E)).